The sequence spans 286 residues: Glycine--tRNA ligase alpha subunit (286 aa).

Belongs to the class-II aminoacyl-tRNA synthetase family. As to quaternary structure, tetramer of two alpha and two beta subunits.

It localises to the cytoplasm. The catalysed reaction is tRNA(Gly) + glycine + ATP = glycyl-tRNA(Gly) + AMP + diphosphate. This Thermotoga sp. (strain RQ2) protein is Glycine--tRNA ligase alpha subunit.